The primary structure comprises 250 residues: Tetrathionate reductase subunit B (250 aa).

A signal peptide (tat-type signal) is located at residues 1-33 (MWTGVNMDSSKRQFLQQLGVLTAGASLVPLAEA). 3 4Fe-4S ferredoxin-type domains span residues 50–79 (YAML…PQGA), 97–128 (VTNV…QRED), and 129–158 (GIVV…INHE). [4Fe-4S] cluster contacts are provided by Cys-59, Cys-62, Cys-65, Cys-69, Cys-106, Cys-109, Cys-114, Cys-118, Cys-138, Cys-141, Cys-144, Cys-148, Cys-165, Cys-168, Cys-180, and Cys-184.

In terms of assembly, probably composed of three subunits: TtrA, TtrB and TtrC. Predicted to be exported by the Tat system. The position of the signal peptide cleavage has not been experimentally proven.

The protein localises to the periplasm. The protein resides in the cell inner membrane. In terms of biological role, part of a membrane-bound tetrathionate reductase that catalyzes the reduction of tetrathionate to thiosulfate. TtrB is probably involved in transfer of electrons from TtrC to TtrA. During mice infection, the ability to use tetrathionate as an electron acceptor is a growth advantage for S.typhimurium over the competing microbiota in the lumen of the inflamed gut. This is Tetrathionate reductase subunit B (ttrB) from Salmonella typhimurium (strain LT2 / SGSC1412 / ATCC 700720).